Here is a 204-residue protein sequence, read N- to C-terminus: uncharacterized protein (204 aa).

The protein localises to the mitochondrion. This is an uncharacterized protein from Arabidopsis thaliana (Mouse-ear cress).